We begin with the raw amino-acid sequence, 769 residues long: Transferrin receptor protein 1 (769 aa).

Residues 1-70 (MMDQARSAFS…KPKRFNGFIC (70 aa)) lie on the Cytoplasmic side of the membrane. A mediates interaction with SH3BP4 region spans residues 1-70 (MMDQARSAFS…KPKRFNGFIC (70 aa)). A phosphoserine mark is found at Ser-10 and Ser-19. Phosphotyrosine is present on Tyr-20. Positions 20 to 23 (YTRF) match the Endocytosis signal motif. Thr-21 carries the phosphothreonine modification. Ser-24 bears the Phosphoserine mark. The Stop-transfer sequence signature appears at 61 to 64 (KPKR). Cys-70 carries the S-palmitoyl cysteine lipid modification. The chain crosses the membrane as a helical; Signal-anchor for type II membrane protein span at residues 71-91 (YGTIAIILFFLIGFMIGYLGY). Topologically, residues 92–769 (CKRVEAKSEC…GDIWDIDNEF (678 aa)) are extracellular. Residue Thr-107 is glycosylated (O-linked (GalNAc...) threonine). The 91-residue stretch at 232–322 (SKAATVTGRL…GTGDPYTPGF (91 aa)) folds into the PA domain. N-linked (GlcNAc...) asparagine glycosylation is found at Asn-260 and Asn-326. The ligand-binding stretch occupies residues 578–769 (TMDVYEKLIQ…GDIWDIDNEF (192 aa)). Residues 655-657 (RGD) carry the Cell attachment site motif. N-linked (GlcNAc...) asparagine glycosylation is found at Asn-731 and Asn-736.

This sequence belongs to the peptidase M28 family. M28B subfamily. In terms of assembly, homodimer; disulfide-linked. Binds one transferrin molecule per subunit. Interacts with SH3BP4. Homodimer; disulfide-linked. Binds one transferrin or HFE molecule per subunit. Binds the HLA class II histocompatibility antigen, DR1. Interacts with SH3BP3. Interacts with STEAP3; facilitates TFRC endocytosis in erythroid precursor cells. Stearoylated by ZDHHC6 which inhibits TFRC-mediated activation of the JNK pathway and promotes mitochondrial fragmentation. Stearoylation does not affect iron uptake. Post-translationally, N- and O-glycosylated, phosphorylated and palmitoylated.

The protein localises to the cell membrane. The protein resides in the melanosome. Functionally, cellular uptake of iron occurs via receptor-mediated endocytosis of ligand-occupied transferrin receptor into specialized endosomes. Endosomal acidification leads to iron release. The apotransferrin-receptor complex is then recycled to the cell surface with a return to neutral pH and the concomitant loss of affinity of apotransferrin for its receptor. Transferrin receptor is necessary for development of erythrocytes and the nervous system. Positively regulates T and B cell proliferation through iron uptake. Acts as a lipid sensor that regulates mitochondrial fusion by regulating activation of the JNK pathway. When dietary levels of stearate (C18:0) are low, promotes activation of the JNK pathway, resulting in HUWE1-mediated ubiquitination and subsequent degradation of the mitofusin MFN2 and inhibition of mitochondrial fusion. When dietary levels of stearate (C18:0) are high, TFRC stearoylation inhibits activation of the JNK pathway and thus degradation of the mitofusin MFN2. Mediates uptake of NICOL1 into fibroblasts where it may regulate extracellular matrix production. This is Transferrin receptor protein 1 (TFRC) from Felis catus (Cat).